Consider the following 95-residue polypeptide: UPF0235 protein PTH_1821 (95 aa).

Belongs to the UPF0235 family.

The chain is UPF0235 protein PTH_1821 from Pelotomaculum thermopropionicum (strain DSM 13744 / JCM 10971 / SI).